We begin with the raw amino-acid sequence, 170 residues long: Cathelicidin antimicrobial peptide (170 aa).

Residues Met1 to Ala30 form the signal peptide. A propeptide spans Gln31–Arg131 (cathelin-like domain (CLD)). 2 disulfide bridges follow: Cys86-Cys97 and Cys108-Cys125. The segment at Phe150 to Gln162 is active core.

The protein belongs to the cathelicidin family. In terms of assembly, monomer, homodimer or homotrimer (in vitro). Oligomerizes as tetra- or hexamer in solution (in vitro). In terms of processing, proteolytically cleaved by proteinase PRTN3 into antibacterial peptide LL-37. Proteolytically cleaved by cathepsin CTSG and neutrophil elastase ELANE. Post-translationally, resistant to proteolytic degradation in solution, and when bound to both zwitterionic (mimicking mammalian membranes) and negatively charged membranes (mimicking bacterial membranes). After secretion onto the skin surface, the CAMP gene product is processed by a serine protease-dependent mechanism into multiple novel antimicrobial peptides distinct from and shorter than cathelicidin LL-37. These peptides show enhanced antimicrobial action, acquiring the ability to kill skin pathogens such as S.aureus, E.coli and C.albicans. These peptides have lost the ability to stimulate CXCL8/IL8 release from keratinocytes. The peptides act synergistically, killing bacteria at lower concentrations when present together, and maintain activity at increased salt condition.

It is found in the secreted. The protein resides in the vesicle. In terms of biological role, antimicrobial protein that is an integral component of the innate immune system. Binds to bacterial lipopolysaccharides (LPS). Acts via neutrophil N-formyl peptide receptors to enhance the release of CXCL2. Postsecretory processing generates multiple cathelicidin antimicrobial peptides with various lengths which act as a topical antimicrobial defense in sweat on skin. The unprocessed precursor form, cathelicidin antimicrobial peptide, inhibits the growth of Gram-negative E.coli and E.aerogenes with efficiencies comparable to that of the mature peptide LL-37 (in vitro). Functionally, antimicrobial peptide that is an integral component of the innate immune system. Binds to bacterial lipopolysaccharides (LPS). Causes membrane permeabilization by forming transmembrane pores (in vitro). Causes lysis of E.coli. Exhibits antimicrobial activity against Gram-negative bacteria such as P.aeruginosa, S.typhimurium, E.aerogenes, E.coli and P.syringae, Gram-positive bacteria such as L.monocytogenes, S.epidermidis, S.pyogenes and S.aureus, as well as vancomycin-resistant enterococci (in vitro). Exhibits antimicrobial activity against methicillin-resistant S.aureus, P.mirabilis, and C.albicans in low-salt media, but not in media containing 100 mM NaCl (in vitro). Forms chiral supramolecular assemblies with quinolone signal (PQS) molecules of P.aeruginosa, which may lead to interference of bacterial quorum signaling and perturbance of bacterial biofilm formation. May form supramolecular fiber-like assemblies on bacterial membranes. Induces cytokine and chemokine producation as well as TNF/TNFA and CSF2/GMCSF production in normal human keratinocytes. Exhibits hemolytic activity against red blood cells. Exhibits antimicrobial activity against E.coli and B.megaterium (in vitro). The polypeptide is Cathelicidin antimicrobial peptide (Nomascus gabriellae (Red-cheeked gibbon)).